We begin with the raw amino-acid sequence, 668 residues long: UvrABC system protein C (668 aa).

The 78-residue stretch at 14 to 91 (DSPGCYLHKD…IQRYKPKYNI (78 aa)) folds into the GIY-YIG domain. The 36-residue stretch at 196 to 231 (KKIVNELEAKMMVSSDNMEFEQAAEYRDVIKAIGTL) folds into the UVR domain.

Belongs to the UvrC family. Interacts with UvrB in an incision complex.

Its subcellular location is the cytoplasm. In terms of biological role, the UvrABC repair system catalyzes the recognition and processing of DNA lesions. UvrC both incises the 5' and 3' sides of the lesion. The N-terminal half is responsible for the 3' incision and the C-terminal half is responsible for the 5' incision. The sequence is that of UvrABC system protein C from Lactococcus lactis subsp. lactis (strain IL1403) (Streptococcus lactis).